The chain runs to 303 residues: Acetaldehyde dehydrogenase (303 aa).

Residue Cys-130 is the Acyl-thioester intermediate of the active site. NAD(+) contacts are provided by residues 161 to 169 and Asn-272; that span reads SVGPGTRKN.

This sequence belongs to the acetaldehyde dehydrogenase family.

It catalyses the reaction acetaldehyde + NAD(+) + CoA = acetyl-CoA + NADH + H(+). The sequence is that of Acetaldehyde dehydrogenase from Verminephrobacter eiseniae (strain EF01-2).